The primary structure comprises 261 residues: tRNA pseudouridine synthase A (261 aa).

The Nucleophile role is filled by Asp-51. Residue Tyr-109 participates in substrate binding.

Belongs to the tRNA pseudouridine synthase TruA family. In terms of assembly, homodimer.

The enzyme catalyses uridine(38/39/40) in tRNA = pseudouridine(38/39/40) in tRNA. Formation of pseudouridine at positions 38, 39 and 40 in the anticodon stem and loop of transfer RNAs. The protein is tRNA pseudouridine synthase A of Shewanella loihica (strain ATCC BAA-1088 / PV-4).